A 222-amino-acid polypeptide reads, in one-letter code: Protein GrpE (222 aa).

The protein belongs to the GrpE family. Homodimer.

The protein localises to the cytoplasm. Its function is as follows. Participates actively in the response to hyperosmotic and heat shock by preventing the aggregation of stress-denatured proteins, in association with DnaK and GrpE. It is the nucleotide exchange factor for DnaK and may function as a thermosensor. Unfolded proteins bind initially to DnaJ; upon interaction with the DnaJ-bound protein, DnaK hydrolyzes its bound ATP, resulting in the formation of a stable complex. GrpE releases ADP from DnaK; ATP binding to DnaK triggers the release of the substrate protein, thus completing the reaction cycle. Several rounds of ATP-dependent interactions between DnaJ, DnaK and GrpE are required for fully efficient folding. The chain is Protein GrpE from Bartonella bacilliformis (strain ATCC 35685 / KC583 / Herrer 020/F12,63).